Consider the following 1332-residue polypeptide: DEMETER-like protein 2 (1332 aa).

Residues M1–V23 show a composition bias toward basic and acidic residues. Disordered regions lie at residues M1 to Q29, V137 to E242, and V280 to D317. Residues V137 to L153 are compositionally biased toward polar residues. Residues S223–A236 are compositionally biased toward low complexity. Residues P301 to G312 are compositionally biased toward basic residues. The tract at residues K497 to P595 is DEMETER. Residues H739–Q753 show a composition bias toward polar residues. The segment at H739–R810 is disordered. Residues K763 to S777 show a composition bias toward basic residues. The span at K787–R810 shows a compositional bias: basic and acidic residues. The [4Fe-4S] cluster site is built by C970, C977, C980, and C986.

This sequence belongs to the DNA glycosylase family. DEMETER subfamily. The cofactor is [4Fe-4S] cluster.

It is found in the nucleus. Functionally, potential transcriptional activator that may act by nicking the target promoter. Catalyzes the release of 5-methylcytosine (5-meC) from DNA by a glycosylase/lyase mechanism. This is DEMETER-like protein 2 (DML2) from Arabidopsis thaliana (Mouse-ear cress).